The primary structure comprises 707 residues: MNYSLFISCSKGLEYLLEDELKGLGLHVTQVSPQGVYGEASLPVIYNLCLWSRLANRIQLILFSGHAAKEQAVHQLCTDFHWQTVFTHDKTIAIEFHGASEQIRNTMFGAQIVKDGIVDHFRRLNGSRPSVDKEKPQILIHAHLKNDILTVSFDLVGYSLHQRGYRKKAGKAPLKENVAAAMLLRAKWPELAAQGYGLHDPFCGSGTLVIEAAMMAAHIAPGLLRQDQSLQYWARHQSSLWEKLRTQALQQVKPLAVKLVGTDADGKIITLARSNAERAGVLPLVEFNTLPLNACRPGTKKGLVVCNPPYGERLGEVTQLVPLYQQLGTTLHTCYQGWQAAILTSSPVLAKALGLRADKQYTLYNGPLECKLYCLTLSAANKLKNTPNAPLSDNAQMLFNRLEKNRNHLQKWARKNQITCYRIYDADLPEYAYAIDIYNDYAVLQEYAPPASIPVHKAEKRSLEMLQVVPRALGIHPEKLIVKQRKQQKGSEQYQKIGKTSQRLIVTEGKAKLIVNLYDYLDTGLFLDHRLMRLKFAQLEPGTRFLNCFCYTASASVHAALAGALTTNVDLSKTYLLWAEDNFRLNDIDLSKHQFLQYDCKEWMKITRDKFDVIFLDPPSFSNSKRMSDILDIQRDHVSLINMAMRLLNPNGVLYFSTNLRQFKLEPMLKEKYAVQDITPQTIDQDFKRNSKIHHCFKIVMPHFADN.

The region spanning 44 to 155 (VIYNLCLWSR…NDILTVSFDL (112 aa)) is the THUMP domain.

This sequence belongs to the methyltransferase superfamily. RlmKL family.

The protein resides in the cytoplasm. It catalyses the reaction guanosine(2445) in 23S rRNA + S-adenosyl-L-methionine = N(2)-methylguanosine(2445) in 23S rRNA + S-adenosyl-L-homocysteine + H(+). The enzyme catalyses guanosine(2069) in 23S rRNA + S-adenosyl-L-methionine = N(2)-methylguanosine(2069) in 23S rRNA + S-adenosyl-L-homocysteine + H(+). In terms of biological role, specifically methylates the guanine in position 2445 (m2G2445) and the guanine in position 2069 (m7G2069) of 23S rRNA. The sequence is that of Ribosomal RNA large subunit methyltransferase K/L from Legionella pneumophila (strain Corby).